Reading from the N-terminus, the 2219-residue chain is RNA-directed RNA polymerase L (2219 aa).

The segment at 26-289 (KLAFLVQTEP…TTEDDVEYLI (264 aa)) is endonuclease. Mn(2+)-binding residues include Glu51, Asp89, and Glu102. Lys115 is a catalytic residue. Residues 1177 to 1373 (LSMKLNVSLA…YMSDQLNKFV (197 aa)) enclose the RdRp catalytic domain. A Mg(2+)-binding site is contributed by Asp1335.

The protein belongs to the Bunyavirales RNA polymerase family. Homomultimer; the oligomeric structure is essential for the polymerase activity. Interacts with nucleoprotein N. Interacts with protein Z; this interaction inhibits viral transcription and replication, Z partially blocks the product exit tunnel for the releasing nascent RNA product. Requires Mn(2+) as cofactor. The cofactor is Mg(2+).

The protein localises to the virion. The protein resides in the host cytoplasm. The enzyme catalyses RNA(n) + a ribonucleoside 5'-triphosphate = RNA(n+1) + diphosphate. Functionally, RNA-dependent RNA polymerase, which is responsible for the replication and transcription of the viral RNA genome using antigenomic RNA as an intermediate. During transcription, synthesizes subgenomic RNAs and assures their capping by a cap-snatching mechanism, which involves the endonuclease activity cleaving the host capped pre-mRNAs. These short capped RNAs are then used as primers for viral transcription. The 3'-end of subgenomic mRNAs molecules are heterogeneous and not polyadenylated. The replicase function is to direct synthesis of antigenomic and genomic RNA which are encapsidated and non capped. As a consequence of the use of the same enzyme for both transcription and replication, these mechanisms need to be well coordinated. These processes may be regulated by proteins N and Z in a dose-dependent manner. Z protein inhibits the viral polymerase L und thus the viral transcription and RNA synthesis. In Homo sapiens (Human), this protein is RNA-directed RNA polymerase L.